We begin with the raw amino-acid sequence, 341 residues long: Phenylalanine--tRNA ligase alpha subunit (341 aa).

Glu-256 is a Mg(2+) binding site.

The protein belongs to the class-II aminoacyl-tRNA synthetase family. Phe-tRNA synthetase alpha subunit type 1 subfamily. As to quaternary structure, tetramer of two alpha and two beta subunits. Requires Mg(2+) as cofactor.

Its subcellular location is the cytoplasm. It carries out the reaction tRNA(Phe) + L-phenylalanine + ATP = L-phenylalanyl-tRNA(Phe) + AMP + diphosphate + H(+). This chain is Phenylalanine--tRNA ligase alpha subunit (pheS), found in Chlamydia muridarum (strain MoPn / Nigg).